The chain runs to 105 residues: Heat shock protein HspQ (105 aa).

This sequence belongs to the HspQ family.

It localises to the cytoplasm. Its function is as follows. Involved in the degradation of certain denaturated proteins, including DnaA, during heat shock stress. This Blochmanniella floridana protein is Heat shock protein HspQ.